The following is a 237-amino-acid chain: Leucyl/phenylalanyl-tRNA--protein transferase (237 aa).

Belongs to the L/F-transferase family.

The protein resides in the cytoplasm. The enzyme catalyses N-terminal L-lysyl-[protein] + L-leucyl-tRNA(Leu) = N-terminal L-leucyl-L-lysyl-[protein] + tRNA(Leu) + H(+). It catalyses the reaction N-terminal L-arginyl-[protein] + L-leucyl-tRNA(Leu) = N-terminal L-leucyl-L-arginyl-[protein] + tRNA(Leu) + H(+). It carries out the reaction L-phenylalanyl-tRNA(Phe) + an N-terminal L-alpha-aminoacyl-[protein] = an N-terminal L-phenylalanyl-L-alpha-aminoacyl-[protein] + tRNA(Phe). In terms of biological role, functions in the N-end rule pathway of protein degradation where it conjugates Leu, Phe and, less efficiently, Met from aminoacyl-tRNAs to the N-termini of proteins containing an N-terminal arginine or lysine. The sequence is that of Leucyl/phenylalanyl-tRNA--protein transferase (aat) from Vibrio vulnificus (strain CMCP6).